We begin with the raw amino-acid sequence, 149 residues long: F420H(2)-dependent quinone reductase MT1299 (149 aa).

Residues 48–50, 54–59, 70–73, 81–85, and tyrosine 130 contribute to the coenzyme F420-(gamma-Glu)n site; these read AKT, RTTSLT, VASK, and GWYHN.

The protein belongs to the F420H(2)-dependent quinone reductase family.

It localises to the cell membrane. The catalysed reaction is oxidized coenzyme F420-(gamma-L-Glu)(n) + a quinol + H(+) = reduced coenzyme F420-(gamma-L-Glu)(n) + a quinone. Involved in a F420-dependent anti-oxidant mechanism that protects M.tuberculosis against oxidative stress and bactericidal agents. Catalyzes the F420H(2)-dependent two-electron reduction of quinones to dihydroquinones, thereby preventing the formation of cytotoxic semiquinones obtained by the one-electron reduction pathway. In vitro, catalyzes the reduction of menadione to menadiol; since menaquinone is the sole quinone electron carrier in the respiratory chain in M.tuberculosis, the physiological electron acceptor for Fqr-mediated F420H(2) oxidation is therefore likely to be the endogenous menaquinone found in the membrane fraction of M.tuberculosis. The sequence is that of F420H(2)-dependent quinone reductase MT1299 from Mycobacterium tuberculosis (strain CDC 1551 / Oshkosh).